The primary structure comprises 352 residues: UDP-N-acetylglucosamine--N-acetylmuramyl-(pentapeptide) pyrophosphoryl-undecaprenol N-acetylglucosamine transferase (352 aa).

Residues 14–16, asparagine 124, arginine 164, serine 185, and glutamine 285 contribute to the UDP-N-acetyl-alpha-D-glucosamine site; that span reads TGG.

The protein belongs to the glycosyltransferase 28 family. MurG subfamily.

The protein resides in the cell inner membrane. The enzyme catalyses di-trans,octa-cis-undecaprenyl diphospho-N-acetyl-alpha-D-muramoyl-L-alanyl-D-glutamyl-meso-2,6-diaminopimeloyl-D-alanyl-D-alanine + UDP-N-acetyl-alpha-D-glucosamine = di-trans,octa-cis-undecaprenyl diphospho-[N-acetyl-alpha-D-glucosaminyl-(1-&gt;4)]-N-acetyl-alpha-D-muramoyl-L-alanyl-D-glutamyl-meso-2,6-diaminopimeloyl-D-alanyl-D-alanine + UDP + H(+). It functions in the pathway cell wall biogenesis; peptidoglycan biosynthesis. Cell wall formation. Catalyzes the transfer of a GlcNAc subunit on undecaprenyl-pyrophosphoryl-MurNAc-pentapeptide (lipid intermediate I) to form undecaprenyl-pyrophosphoryl-MurNAc-(pentapeptide)GlcNAc (lipid intermediate II). This Chlamydia trachomatis serovar A (strain ATCC VR-571B / DSM 19440 / HAR-13) protein is UDP-N-acetylglucosamine--N-acetylmuramyl-(pentapeptide) pyrophosphoryl-undecaprenol N-acetylglucosamine transferase.